We begin with the raw amino-acid sequence, 263 residues long: Microtubule-associated protein RP/EB family member 1 (263 aa).

In terms of domain architecture, Calponin-homology (CH) spans 14–116; the sequence is NLSRHDMLAW…FVQWFKKFFD (103 aa). Residues 150–182 form a disordered region; the sequence is KPLGTGSAGPQRPIVAQRTPATPKGGTGMVKKA. Positions 180–250 constitute an EB1 C-terminal domain; sequence KKAAGDDESA…LYATDEGFVI (71 aa).

This sequence belongs to the MAPRE family.

The protein localises to the cytoplasm. It localises to the cytoskeleton. Its subcellular location is the microtubule organizing center. The protein resides in the centrosome. It is found in the golgi apparatus. The protein localises to the spindle. It localises to the spindle pole. Functionally, plus-end tracking protein (+TIP) that binds to the plus-end of microtubules and regulates the dynamics of the microtubule cytoskeleton. Promotes cytoplasmic microtubule nucleation and elongation. Involved in mitotic spindle positioning by stabilizing microtubules and promoting dynamic connection between astral microtubules and the cortex during mitotic chromosome segregation. This chain is Microtubule-associated protein RP/EB family member 1 (MAPRE1), found in Coturnix japonica (Japanese quail).